The following is a 536-amino-acid chain: 1,4-beta-D-glucan cellobiohydrolase B (536 aa).

An N-terminal signal peptide occupies residues 1–21 (MSSFQIYRAALLLSILATANA). A catalytic region spans residues 22 to 458 (QQVGTYTTET…SNIKFGPIGS (437 aa)). Glu233 acts as the Nucleophile in catalysis. Catalysis depends on Glu238, which acts as the Proton donor. N-linked (GlcNAc...) asparagine glycosylation is found at Asn351 and Asn414. Residues 459–500 (TYSSGSSSGSGSSSSSSSTTTKATSTTLKTTSTTSSGSSSTS) are ser/Thr-rich linker. The tract at residues 464-499 (SSSGSGSSSSSSSTTTKATSTTLKTTSTTSSGSSST) is disordered. Residues 500–536 (SAAQAYGQCGGQGWTGPTTCVSGYTCTYENAYYSQCL) form the CBM1 domain. Cystine bridges form between Cys508/Cys525 and Cys519/Cys535.

Belongs to the glycosyl hydrolase 7 (cellulase C) family.

It localises to the secreted. It catalyses the reaction Hydrolysis of (1-&gt;4)-beta-D-glucosidic linkages in cellulose and cellotetraose, releasing cellobiose from the non-reducing ends of the chains.. Functionally, the biological conversion of cellulose to glucose generally requires three types of hydrolytic enzymes: (1) Endoglucanases which cut internal beta-1,4-glucosidic bonds; (2) Exocellobiohydrolases that cut the disaccharide cellobiose from the non-reducing end of the cellulose polymer chain; (3) Beta-1,4-glucosidases which hydrolyze the cellobiose and other short cello-oligosaccharides to glucose. In Aspergillus niger, this protein is 1,4-beta-D-glucan cellobiohydrolase B (cbhB).